The chain runs to 594 residues: Probable acyl-CoA dehydrogenase (594 aa).

Glu-405 (proton acceptor) is an active-site residue.

Belongs to the acyl-CoA dehydrogenase family. FAD is required as a cofactor.

The catalysed reaction is a 2,3-saturated acyl-CoA + A = a 2,3-dehydroacyl-CoA + AH2. The protein operates within lipid metabolism; fatty acid beta-oxidation. Its function is as follows. Involved in the degradation of long-chain fatty acids. The sequence is that of Probable acyl-CoA dehydrogenase (fadE) from Bacillus subtilis (strain 168).